An 861-amino-acid polypeptide reads, in one-letter code: Bifunctional uridylyltransferase/uridylyl-removing enzyme (861 aa).

Residues 1 to 321 (MKNDNRIIKN…VYHQKQKIIR (321 aa)) are uridylyltransferase. Positions 322–678 (LDDEFQLSNR…IMPHHSQGGT (357 aa)) are uridylyl-removing. Residues 440–562 (VDQHTLFVIR…LPHARYLDYL (123 aa)) enclose the HD domain. ACT domains are found at residues 679-760 (EVFI…AVSR) and 788-861 (QLFL…KSKY).

The protein belongs to the GlnD family. Mg(2+) serves as cofactor.

The enzyme catalyses [protein-PII]-L-tyrosine + UTP = [protein-PII]-uridylyl-L-tyrosine + diphosphate. It carries out the reaction [protein-PII]-uridylyl-L-tyrosine + H2O = [protein-PII]-L-tyrosine + UMP + H(+). With respect to regulation, uridylyltransferase (UTase) activity is inhibited by glutamine, while glutamine activates uridylyl-removing (UR) activity. Functionally, modifies, by uridylylation and deuridylylation, the PII regulatory proteins (GlnB and homologs), in response to the nitrogen status of the cell that GlnD senses through the glutamine level. Under low glutamine levels, catalyzes the conversion of the PII proteins and UTP to PII-UMP and PPi, while under higher glutamine levels, GlnD hydrolyzes PII-UMP to PII and UMP (deuridylylation). Thus, controls uridylylation state and activity of the PII proteins, and plays an important role in the regulation of nitrogen assimilation and metabolism. The sequence is that of Bifunctional uridylyltransferase/uridylyl-removing enzyme from Legionella pneumophila subsp. pneumophila (strain Philadelphia 1 / ATCC 33152 / DSM 7513).